Consider the following 560-residue polypeptide: MSLSKEVPSFRWTQSLRRELSSYTQQTKTLVLKDAKMIADSLDFNQVSQVQRVLRKAKRSDADLDKLRDLNQEVDKLMVMKSVQKNTILKLGDLGKDELMDLATDLEKLKRKIGDSGRDGPRPYMGNLTQSQLDKRTQILRVLGFQQQTGVSRGVVRLWDVSNPAKLNNQFGSMPALTIACMTVQGGETMNNVVQALTSLGLLYTVKYPNLEDLEKLTQEHDCLQIITRDESAVNISGYNFSLSAAVKAGASLIDGGNMLETIRVTPNNFSSIIKATLTAKRKENMFVDERPGNRNPYENLLYKVCLSGEGWPYIGSRSQINGRSWDNTSVDLNPKPDPGPRAPEKNGQNLRLSNLTEMQEAVIKEAMQKLDPTNTIWMDIEGPPTDPVELAVFQPTSGYYFHCFRKPHDEKGFKNGSRHSHGILLKDLEDAQPGLLSYILGLLPQNIVITTQGADDIRKLLDVHGRKDIKLVDVRLTNEQSRIFEQQVWERYNSLCRAHNGVIVPKKKNKESNIQKEPHCALLDCIMFQSVLDGHLPDTSLKPLLPDNLVHQAKPAFVM.

A binding site for the cap structure m7GTP region spans residues 54–236 (LRKAKRSDAD…ITRDESAVNI (183 aa)). A compositionally biased stretch (polar residues) spans 323-332 (GRSWDNTSVD). The disordered stretch occupies residues 323-349 (GRSWDNTSVDLNPKPDPGPRAPEKNGQ). Mn(2+) is bound by residues aspartate 380 and glutamate 382. Residues glutamate 390, cysteine 497, histidine 500, and cysteine 521 each contribute to the Zn(2+) site. Aspartate 525 contacts Mn(2+).

It belongs to the arenaviridae nucleocapsid protein family. Homomultimerizes to form the nucleocapsid. Binds to viral genomic RNA. Interacts with glycoprotein G2. Interacts with protein Z; this interaction probably directs the encapsidated genome to budding sites. Interacts with protein L; this interaction does not interfere with Z-L interaction. Interacts with host IKBKE (via Protein kinase domain); the interaction inhibits IKBKE kinase activity.

The protein localises to the virion. It localises to the host cytoplasm. Encapsidates the genome, protecting it from nucleases. The encapsidated genomic RNA is termed the nucleocapsid (NC). Serves as template for viral transcription and replication. The increased presence of protein N in host cell does not seem to trigger the switch from transcription to replication as observed in other negative strain RNA viruses. Through the interaction with host IKBKE, strongly inhibits the phosphorylation and nuclear translocation of host IRF3, a protein involved in interferon activation pathway, leading to the inhibition of interferon-beta and IRF3-dependent promoters activation. Also encodes a functional 3'-5' exoribonuclease that degrades preferentially dsRNA substrates and thereby participates in the suppression of interferon induction. This is Nucleoprotein from Cupixi mammarenavirus (isolate Rat/Brasil/BeAn 119303/1970) (CPXV).